The primary structure comprises 62 residues: Small ribosomal subunit protein bS21 (62 aa).

Residues 43–52 are compositionally biased toward basic and acidic residues; the sequence is VKKKLKSEAA. Residues 43 to 62 form a disordered region; it reads VKKKLKSEAARKRKAKKKRF. Basic residues predominate over residues 53–62; that stretch reads RKRKAKKKRF.

The protein belongs to the bacterial ribosomal protein bS21 family.

This chain is Small ribosomal subunit protein bS21, found in Levilactobacillus brevis (strain ATCC 367 / BCRC 12310 / CIP 105137 / JCM 1170 / LMG 11437 / NCIMB 947 / NCTC 947) (Lactobacillus brevis).